We begin with the raw amino-acid sequence, 206 residues long: GTP cyclohydrolase 1 (206 aa).

Positions 1–17 (MDAVTPKKDIPRPDSVR) are enriched in basic and acidic residues. The segment at 1–23 (MDAVTPKKDIPRPDSVRRPSQQE) is disordered. Residues Cys-95, His-98, and Cys-166 each contribute to the Zn(2+) site.

Belongs to the GTP cyclohydrolase I family. Toroid-shaped homodecamer, composed of two pentamers of five dimers.

The catalysed reaction is GTP + H2O = 7,8-dihydroneopterin 3'-triphosphate + formate + H(+). The protein operates within cofactor biosynthesis; 7,8-dihydroneopterin triphosphate biosynthesis; 7,8-dihydroneopterin triphosphate from GTP: step 1/1. The polypeptide is GTP cyclohydrolase 1 (Hyphomonas neptunium (strain ATCC 15444)).